The chain runs to 88 residues: Small ribosomal subunit protein uS15c (88 aa).

The protein belongs to the universal ribosomal protein uS15 family. Part of the 30S ribosomal subunit.

The protein resides in the plastid. It localises to the chloroplast. This Nasturtium officinale (Watercress) protein is Small ribosomal subunit protein uS15c (rps15).